A 130-amino-acid chain; its full sequence is MAQVQYYGTGRRKSSVARVRLVPGEGRVIINGRDFENYIPFAALREVVKQPLVATETLGNYDVLVNVNGGGYTGQAGAIRHGIARALLKADPEYRLTLKRAGLLTRDARMKERKKYGLKGARRAPQFSKR.

It belongs to the universal ribosomal protein uS9 family.

This chain is Small ribosomal subunit protein uS9, found in Bacillus cytotoxicus (strain DSM 22905 / CIP 110041 / 391-98 / NVH 391-98).